A 198-amino-acid chain; its full sequence is Large ribosomal subunit protein eL19 (198 aa).

2 disordered regions span residues Tyr-66–Ala-85 and Lys-150–Gln-177. Basic residues predominate over residues Arg-71–Gly-83. Over residues Gln-160 to Gln-177 the composition is skewed to basic and acidic residues.

Belongs to the eukaryotic ribosomal protein eL19 family.

The chain is Large ribosomal subunit protein eL19 (rpl-19) from Caenorhabditis elegans.